The primary structure comprises 392 residues: General receptor for phosphoinositides 1-associated scaffold protein (392 aa).

Positions 1-50 (MTLRRLRKLQQKEEATAAPDPAGRAPDSEAARAAPLPSGPPAAAAPPGAP) are disordered. Residues 37–49 (PSGPPAAAAPPGA) show a composition bias toward pro residues. Thr-76 bears the Phosphothreonine mark. Ser-93 is modified (phosphoserine). Residues 100-189 (VLTLEKGDNQ…VLRLETLYGT (90 aa)) form the PDZ domain. The interval 180–257 (VLRLETLYGT…GAGLLPGSLP (78 aa)) is interaction with PSCD3. Tyr-236 carries the post-translational modification Phosphotyrosine. The residue at position 269 (Arg-269) is an Omega-N-methylarginine. The tract at residues 294-315 (PQALPPPPPPARALGPSSAETP) is disordered. Ser-384 bears the Phosphoserine mark.

In terms of assembly, heteromer. Composed of TAMALIN, CYTH2 and at least one GRM1. Also interacts with GRM2, GRM3 and GRM5. Interacts with CYTH3. As to expression, highly expressed in brain, heart and lung, and to a lower extent in embryo, kidney and ovary.

It is found in the cytoplasm. Its subcellular location is the perinuclear region. The protein resides in the cell membrane. The protein localises to the postsynaptic cell membrane. Its function is as follows. Plays a role in intracellular trafficking and contributes to the macromolecular organization of group 1 metabotropic glutamate receptors (mGluRs) at synapses. In Mus musculus (Mouse), this protein is General receptor for phosphoinositides 1-associated scaffold protein.